A 213-amino-acid chain; its full sequence is Orotate phosphoribosyltransferase (213 aa).

K26 provides a ligand contact to 5-phospho-alpha-D-ribose 1-diphosphate. F34–F35 contacts orotate. 5-phospho-alpha-D-ribose 1-diphosphate is bound by residues Y72–K73, R99, K100, K103, H105, and D124–A132. Positions 128 and 156 each coordinate orotate.

The protein belongs to the purine/pyrimidine phosphoribosyltransferase family. PyrE subfamily. Homodimer. Mg(2+) is required as a cofactor.

It catalyses the reaction orotidine 5'-phosphate + diphosphate = orotate + 5-phospho-alpha-D-ribose 1-diphosphate. It functions in the pathway pyrimidine metabolism; UMP biosynthesis via de novo pathway; UMP from orotate: step 1/2. In terms of biological role, catalyzes the transfer of a ribosyl phosphate group from 5-phosphoribose 1-diphosphate to orotate, leading to the formation of orotidine monophosphate (OMP). In Pseudomonas syringae pv. syringae (strain B728a), this protein is Orotate phosphoribosyltransferase.